Reading from the N-terminus, the 206-residue chain is RNA pyrophosphohydrolase (206 aa).

A Nudix hydrolase domain is found at 6–150 (GYRPNVGIVI…KRDVYRKVMK (145 aa)). The Nudix box motif lies at 38–59 (GGINEGENIETAMYRELYEEVG). The span at 162–191 (KPETVEKPRVERTEKRDFQKRDNQKREFRK) shows a compositional bias: basic and acidic residues. The segment at 162–206 (KPETVEKPRVERTEKRDFQKRDNQKREFRKSARTWNNSHQKGKAQ) is disordered.

Belongs to the Nudix hydrolase family. RppH subfamily. A divalent metal cation serves as cofactor.

Functionally, accelerates the degradation of transcripts by removing pyrophosphate from the 5'-end of triphosphorylated RNA, leading to a more labile monophosphorylated state that can stimulate subsequent ribonuclease cleavage. The protein is RNA pyrophosphohydrolase of Actinobacillus pleuropneumoniae serotype 3 (strain JL03).